We begin with the raw amino-acid sequence, 127 residues long: Sulfiredoxin (127 aa).

The protein belongs to the sulfiredoxin family. It depends on Mg(2+) as a cofactor. Forms a transient disulfide bond with TSA1 during the reduction of cysteine sulfinic acid (-SO2H).

The protein localises to the cytoplasm. It is found in the nucleus. The catalysed reaction is S-hydroxy-S-oxy-L-cysteinyl-[peroxiredoxin] + [protein]-dithiol + ATP = S-hydroxy-L-cysteinyl-[peroxiredoxin] + [protein]-disulfide + ADP + phosphate. Its function is as follows. Contributes to oxidative stress resistance by reducing cysteine-sulfinic acid formed under exposure to oxidants in the peroxiredoxin TSA1. May catalyze the reduction in a multi-step process by acting both as a specific phosphotransferase and as thioltransferase. The sequence is that of Sulfiredoxin from Saccharomyces cerevisiae (strain ATCC 204508 / S288c) (Baker's yeast).